The primary structure comprises 838 residues: Glutenin, high molecular weight subunit PW212 (838 aa).

Positions 1-21 (MAKRLVLFVAVVVALVALTVA) are cleaved as a signal peptide. The interval 122-794 (SYYPGQASPQ…GQQSGQGQQG (673 aa)) is disordered. Residues 125 to 136 (PGQASPQRPGQG) are compositionally biased toward low complexity. Residues 137–149 (QQPGQGQQSGQGQ) show a composition bias toward gly residues. Low complexity-rich tracts occupy residues 150-172 (QGYY…GQPG), 179-208 (QQPG…GQPG), 215-245 (QLQP…PGQG), 268-308 (QGQQ…GQSG), 315-356 (QQPG…PGQG), 364-416 (PGYY…PGQG), 445-473 (SPQQ…PGQG), 481-532 (QGQQ…YPTS), 549-643 (QQPG…QGQP), 654-677 (GQGQ…GQPG), 699-719 (QQPG…GQHG), and 729-773 (GQGQ…GQQG).

This sequence belongs to the gliadin/glutenin family. Disulfide-bridge linked aggregates.

In terms of biological role, glutenins are high-molecular weight seed storage proteins of wheat endosperm. Thought to be responsible for the visco-elastic property of wheat dough. The sequence is that of Glutenin, high molecular weight subunit PW212 from Triticum aestivum (Wheat).